A 1454-amino-acid chain; its full sequence is E3 ubiquitin-protein ligase substrate receptor MMS22 (1454 aa).

A disordered region spans residues 159-178 (NSSVQSQRYDSDEEIPKKRH). The segment at 1201 to 1454 (YDEGDISRNF…SEPFKTFKNT (254 aa)) is required for interaction with MMS1.

The protein belongs to the MMS22 family. Component of a cullin-RING ligase (CRL) composed of 4 subunits: the RING protein HRT1, the cullin RTT101, a linker protein MMS1, and the substrate receptor MMS22. This complex further interacts with RTT107 and CTF4 to form RTT101-MMS1-MMS22-RTT107 and RTT101-MMS1-MMS22-CTF4 complexes respectively. Interacts (via C-ter) with MMS1 (via N-ter). Interacts with RTT107.

It is found in the nucleus. Its function is as follows. Substrate targeting component of a cullin-RING-based E3 ubiquitin-protein ligase complex RTT101(MMS1-MMS22). RTT101(MMS1-MMS22) promotes fork progression through damaged DNA or natural pause sites by stabilizing replication proteins like the replication fork-pausing complex (FPC) and leading-strand polymerase at stalled replication forks. RTT101(MMS1-MMS22) ubiquitinates the acetylated histones H3K56ac-H4 at lysine residues H3K121, H3K122 and H3K125. Ubiquitination is required for efficient histone deposition during replication-coupled nucleosome assembly, probably by facilitating the transfer of H3-H4 from ASF1 to other chaperones involved in histone deposition. In Saccharomyces cerevisiae (strain ATCC 204508 / S288c) (Baker's yeast), this protein is E3 ubiquitin-protein ligase substrate receptor MMS22 (MMS22).